The chain runs to 136 residues: ATP synthase epsilon chain (136 aa).

This sequence belongs to the ATPase epsilon chain family. As to quaternary structure, F-type ATPases have 2 components, CF(1) - the catalytic core - and CF(0) - the membrane proton channel. CF(1) has five subunits: alpha(3), beta(3), gamma(1), delta(1), epsilon(1). CF(0) has three main subunits: a, b and c.

The protein resides in the cell membrane. Functionally, produces ATP from ADP in the presence of a proton gradient across the membrane. The sequence is that of ATP synthase epsilon chain from Ureaplasma parvum serovar 3 (strain ATCC 27815 / 27 / NCTC 11736).